Here is a 289-residue protein sequence, read N- to C-terminus: Protein FraH (289 aa).

Residues 4–49 (CPNCNHPNPDGAVQCEACYTPLPATSNCPNCGATVQSDAAFCGQCG) form a DZANK-type zinc finger. A zinc finger spans residues 18–48 (CEACYTPLPATSNCPNCGATVQSDAAFCGQC). The 57-residue stretch at 204-260 (VHIGKPNDRIPPDVDVSGFANSEIVSRVHADIRLEGDAHYIEDVGSSNGTYINNLPL) folds into the FHA domain.

Putative heterocyst to vegetative cell connection. The sequence is that of Protein FraH (fraH) from Nostoc sp. (strain PCC 7120 / SAG 25.82 / UTEX 2576).